Reading from the N-terminus, the 583-residue chain is AP-1-like transcription factor YAP1 (583 aa).

Residues 1–86 (MSTSTAKRPF…KELEDKVSQL (86 aa)) form a disordered region. Residues 8–17 (RPFDNKRAGS) show a composition bias toward basic and acidic residues. Residues 24-36 (SDSGGNNSGSSPA) are compositionally biased toward low complexity. Residues 37–46 (SKRRERKPGR) show a composition bias toward basic residues. Positions 41-48 (ERKPGRKP) match the Bipartite nuclear localization signal motif. Composition is skewed to basic and acidic residues over residues 47-58 (KPLETEAKDKRT) and 67-84 (AFRE…DKVS). Residues 51-114 (TEAKDKRTAQ…TNLLSELKRY (64 aa)) form the bZIP domain. The tract at residues 54–77 (KDKRTAQNRAAQRAFRERRERKMK) is basic motif. Positions 79–86 (LEDKVSQL) are leucine-zipper. The short motif at 120 to 127 (KKRDSILL) is the Bipartite nuclear localization signal element. Low complexity predominate over residues 177–195 (SKIPSPSSDSTSPSASTSI). Residues 177-233 (SKIPSPSSDSTSPSASTSILDNANNKSVSSTNLNHSRSSISNSSSSPSNVNGLSSRK) form a disordered region. Over residues 196-207 (LDNANNKSVSST) the composition is skewed to polar residues. Over residues 208 to 230 (NLNHSRSSISNSSSSPSNVNGLS) the composition is skewed to low complexity. The segment at 265 to 272 (CSKLSMAC) is n-CRD. 2 cysteine pairs are disulfide-bonded: cysteine 265-cysteine 531 and cysteine 272-cysteine 562. Disordered stretches follow at residues 275–329 (KSNP…SASA) and 350–373 (QYND…VSAW). Residues 297–312 (KSNSNVNITNHNNNKI) show a composition bias toward low complexity. Residues 316-329 (DLSSSAPLHDSASA) show a composition bias toward polar residues. Residues 531–562 (CSEVWDRITAHPRYSDLDIDGLCLELRTKAKC) are c-CRD. The Nuclear export signal motif lies at 547 to 554 (LDIDGLCL).

This sequence belongs to the bZIP family. YAP subfamily. Post-translationally, oxidative stress induces conformational changes through oxidation of cysteine residues, masking the nuclear export signal, thus abolishing nuclear export by CRM1/exportin 1.

The protein localises to the nucleus. The protein resides in the cytoplasm. Its function is as follows. Transcription activator involved in oxidative stress response and cadmium resistance. Regulates the transcription of genes encoding antioxidant enzymes and components of the cellular thiol-reducing pathways. Activity of the transcription factor is controlled through oxidation of specific cysteine residues resulting in the alteration of its subcellular location. Activation by alkyl hydroperoxides or cadmium induces nuclear accumulation and as a result YAP1 transcriptional activity. This Kluyveromyces lactis (strain ATCC 8585 / CBS 2359 / DSM 70799 / NBRC 1267 / NRRL Y-1140 / WM37) (Yeast) protein is AP-1-like transcription factor YAP1 (YAP1).